Consider the following 205-residue polypeptide: Urease accessory protein UreG (205 aa).

14-21 contributes to the GTP binding site; sequence GPVGSGKT.

Belongs to the SIMIBI class G3E GTPase family. UreG subfamily. Homodimer. UreD, UreF and UreG form a complex that acts as a GTP-hydrolysis-dependent molecular chaperone, activating the urease apoprotein by helping to assemble the nickel containing metallocenter of UreC. The UreE protein probably delivers the nickel.

The protein localises to the cytoplasm. Functionally, facilitates the functional incorporation of the urease nickel metallocenter. This process requires GTP hydrolysis, probably effectuated by UreG. This Escherichia coli O157:H7 protein is Urease accessory protein UreG.